Reading from the N-terminus, the 41-residue chain is Competence-stimulating peptide type 2 (41 aa).

The propeptide occupies 1–24; that stretch reads MKNTVKLEQFVALKEKDLQKIKGG.

The protein belongs to the ComC family.

It is found in the secreted. In terms of biological role, acts as a pheromone, induces cells to develop competence for genetic transformation. The protein is Competence-stimulating peptide type 2 (comC2) of Streptococcus pneumoniae serotype 4 (strain ATCC BAA-334 / TIGR4).